Here is a 323-residue protein sequence, read N- to C-terminus: Putative divalent cation/proton antiporter TMEM165 (323 aa).

An N-terminal signal peptide occupies residues M1 to A33. Topologically, residues G34 to Q88 are lumenal. Positions P35–Q44 are enriched in basic and acidic residues. The disordered stretch occupies residues P35–V60. Over residues A50–A59 the composition is skewed to low complexity. The helical transmembrane segment at A89–L109 threads the bilayer. Residues G110 to R126 are Cytoplasmic-facing. A helical membrane pass occupies residues L127 to F147. Topologically, residues G148–T151 are lumenal. Residues T152–I172 form a helical membrane-spanning segment. Residues R173 to K227 lie on the Cytoplasmic side of the membrane. Residues D184–N211 adopt a coiled-coil conformation. The chain crosses the membrane as a helical span at residues W228–W248. The Lumenal portion of the chain corresponds to G249–Y266. A helical membrane pass occupies residues G267 to G287. The Cytoplasmic portion of the chain corresponds to R288–T298. A helical membrane pass occupies residues V299 to P319. Topologically, residues E320–F323 are lumenal.

The protein belongs to the GDT1 family.

It is found in the golgi apparatus membrane. It carries out the reaction Ca(2+)(in) + n H(+)(out) = Ca(2+)(out) + n H(+)(in). The catalysed reaction is Mn(2+)(in) + n H(+)(out) = Mn(2+)(out) + n H(+)(in). Its function is as follows. Putative divalent cation:proton antiporter that exchanges calcium or manganese ions for protons across the Golgi membrane. Mediates the reversible transport of calcium or manganese to the Golgi lumen driven by the proton gradient and possibly the membrane potential generated by V-ATPase. Provides calcium or manganese cofactors to resident Golgi enzymes and contributes to the maintenance of an acidic luminal Golgi pH required for proper functioning of the secretory pathway. Promotes Ca(2+) storage within the Golgi lumen of the mammary epithelial cells to be then secreted into milk. The transport mechanism and stoichiometry remains to be elucidated. The chain is Putative divalent cation/proton antiporter TMEM165 from Rattus norvegicus (Rat).